Reading from the N-terminus, the 458-residue chain is Alpha-glucosides-binding periplasmic protein AglE (458 aa).

Positions 1-27 are cleaved as a signal peptide; it reads MKRSLLIGVAAFALLAGTAGLAGTAGA.

The protein belongs to the bacterial solute-binding protein 1 family.

It localises to the periplasm. In terms of biological role, part of the binding-protein-dependent transport system for alpha-glucosides such as sucrose, maltose and trehalose. The polypeptide is Alpha-glucosides-binding periplasmic protein AglE (aglE) (Rhizobium meliloti (strain 1021) (Ensifer meliloti)).